The sequence spans 444 residues: Tubulin beta-7 chain (444 aa).

Residues glutamine 11, glutamate 69, serine 138, glycine 142, threonine 143, glycine 144, asparagine 204, and asparagine 226 each contribute to the GTP site. Glutamate 69 contributes to the Mg(2+) binding site.

Belongs to the tubulin family. Dimer of alpha and beta chains. A typical microtubule is a hollow water-filled tube with an outer diameter of 25 nm and an inner diameter of 15 nM. Alpha-beta heterodimers associate head-to-tail to form protofilaments running lengthwise along the microtubule wall with the beta-tubulin subunit facing the microtubule plus end conferring a structural polarity. Microtubules usually have 13 protofilaments but different protofilament numbers can be found in some organisms and specialized cells. The cofactor is Mg(2+). As to expression, expressed in roots, leaf sheaths, and suspension cultured cells.

The protein resides in the cytoplasm. Its subcellular location is the cytoskeleton. Tubulin is the major constituent of microtubules, a cylinder consisting of laterally associated linear protofilaments composed of alpha- and beta-tubulin heterodimers. Microtubules grow by the addition of GTP-tubulin dimers to the microtubule end, where a stabilizing cap forms. Below the cap, tubulin dimers are in GDP-bound state, owing to GTPase activity of alpha-tubulin. This Oryza sativa subsp. japonica (Rice) protein is Tubulin beta-7 chain (TUBB7).